We begin with the raw amino-acid sequence, 57 residues long: Large ribosomal subunit protein bL33 (57 aa).

Belongs to the bacterial ribosomal protein bL33 family.

The protein is Large ribosomal subunit protein bL33 of Shewanella sp. (strain MR-4).